The following is a 9518-amino-acid chain: Nonribosomal peptide synthetase ungA' (9518 aa).

The adenylation 1 stretch occupies residues 214 to 611; sequence ERARETPNAP…ARKDDQVKVR (398 aa). Positions 738–814 constitute a Carrier 1 domain; sequence APRTEMEWRL…DLAEVARLEQ (77 aa). S775 carries the O-(pantetheine 4'-phosphoryl)serine modification. The tract at residues 853-1250 is condensation 1; sequence DLLPCSPLQE…EEVLRQISRE (398 aa). The segment at 1292 to 1695 is adenylation 2; it reads QRVQEQPDRP…GRKDTQVKIR (404 aa). The 77-residue stretch at 1822–1898 folds into the Carrier 2 domain; the sequence is LPQTELERRL…RLAHCSQTEQ (77 aa). S1859 bears the O-(pantetheine 4'-phosphoryl)serine mark. Positions 1911 to 2336 are epimerization 1; it reads TFALSPIQQL…QRSLEVVAKE (426 aa). The segment at 2376–2803 is condensation 2; it reads EDIYPCSPVQ…DNLQIASSQD (428 aa). The tract at residues 2829–3224 is adenylation 3; it reads RIQQQPEAPA…NRKDNQVKIR (396 aa). The Carrier 3 domain maps to 3352–3428; the sequence is APATASEQRL…DMAQTLKVES (77 aa). Residue S3389 is modified to O-(pantetheine 4'-phosphoryl)serine. Residues 3465–3869 form a condensation 3 region; it reads EDVLPCTPLQ…QVCKEASQYL (405 aa). Residues 3906–4307 are adenylation 4; the sequence is QQAHQRPNAS…GRRDAQVKIR (402 aa). The 77-residue stretch at 4436–4512 folds into the Carrier 4 domain; the sequence is TPTTITECRI…RLAACTTPVD (77 aa). O-(pantetheine 4'-phosphoryl)serine is present on S4473. An epimerization 2 region spans residues 4527–4954; that stretch reads ALSPIQQLFV…EDAAQELPSL (428 aa). Positions 4990 to 5411 are condensation 4; that stretch reads VEDIYPCSPI…ANLISKEDLR (422 aa). An adenylation 5 region spans residues 5433-5829; sequence SEQAQNQPDA…GRKDGQVKIR (397 aa). The 77-residue stretch at 5957–6033 folds into the Carrier 5 domain; that stretch reads VASSPVELAL…QLAKNSGLQA (77 aa). O-(pantetheine 4'-phosphoryl)serine is present on S5994. The segment at 6050 to 6470 is epimerization 3; the sequence is ELSPIQRMFF…CEHSLVMAAH (421 aa). A condensation 5 region spans residues 6512–6856; that stretch reads VEDIYPCTPI…TGISVQNNAS (345 aa). Residues 6947-7338 form an adenylation 6 region; that stretch reads LRPNSSAIHA…GRKDSQVKVR (392 aa). The region spanning 7464–7540 is the Carrier 6 domain; that stretch reads LPRTEVEMQL…GLAPSAASQA (77 aa). S7501 bears the O-(pantetheine 4'-phosphoryl)serine mark. The tract at residues 7555 to 7978 is epimerization 4; that stretch reads ELSPIQQMFI…LQTAARELPH (424 aa). The condensation 6 stretch occupies residues 8016–8444; it reads VEDIYPLTPI…QVDLAGRHDQ (429 aa). The interval 8468–8867 is adenylation 7; sequence MQCQQRPDAT…SRKDAQVKIR (400 aa). One can recognise a Carrier 7 domain in the interval 8995–9071; it reads PLTTEMEWRL…DMAHYLREGQ (77 aa). S9032 is subject to O-(pantetheine 4'-phosphoryl)serine. Residues 9111 to 9454 are condensation 7; sequence DVYPTTELQD…DNLEHDAGTS (344 aa).

The protein belongs to the NRP synthetase family.

The protein operates within secondary metabolite biosynthesis. In terms of biological role, nonribosomal peptide synthetase; part of the gene cluster that mediates the biosynthesis of the unguisins, gamma-aminobutyric acid (GABA)-containing fungal cyclic heptapeptides with the amino acid sequence cyclo-(D-Ala1-D-Val2-L-Leu3-beta-MePhe4-D-Ala5-D-Trp6-GABA7) for unguisin H and cyclo-(D-Ala1-D-Ala2-L-Leu3-beta-MePhe4-D-Ala5-D-Trp6-GABA7) for unguisin I. UngA' is the main enzyme within the cluster which condenses the 7 residues using its respective 7 modules. The terminal condensation domain (Ct) is involved in cyclization with D-alanine and thereby releasing of unguisins H and I. The alanine racemase ungC' provides D-alanine, which is then accepted by the first adenylation domain of ungA', whereas the methyltransferase ungE' provides the (2R,3R)-beta-methylphenylalanine residue incorporated by the module 4. Finally, the hydrolase ungD' catalyzes the hydrolysis between the D-tryptophan and GABA residues of unguisins H and I to produce the corresponding linear peptides. This Aspergillus campestris (strain IBT 28561) protein is Nonribosomal peptide synthetase ungA'.